The sequence spans 1579 residues: Pentafunctional AROM polypeptide (1579 aa).

The interval 1–391 is 3-dehydroquinate synthase; it reads MKVELSKVPI…YGTSAHVVSD (391 aa). NAD(+) is bound by residues 44-46, 79-82, 110-112, and aspartate 115; these read DTN, EAHK, and GGV. A 7-phospho-2-dehydro-3-deoxy-D-arabino-heptonate-binding site is contributed by arginine 126. NAD(+) is bound at residue 135–136; it reads TS. 7-phospho-2-dehydro-3-deoxy-D-arabino-heptonate-binding residues include aspartate 142 and lysine 148. Lysine 157 is a binding site for NAD(+). Asparagine 158 is a 7-phospho-2-dehydro-3-deoxy-D-arabino-heptonate binding site. Residues 175–178 and asparagine 186 each bind NAD(+); that span reads WLET. Zn(2+) is bound at residue glutamate 190. Residues 190–193 and lysine 257 each bind 7-phospho-2-dehydro-3-deoxy-D-arabino-heptonate; that span reads EVIK. The active-site Proton acceptor; for 3-dehydroquinate synthase activity is the glutamate 267. 7-phospho-2-dehydro-3-deoxy-D-arabino-heptonate contacts are provided by residues 271–275 and histidine 278; that span reads RNLLN. A Zn(2+)-binding site is contributed by histidine 278. Histidine 282 (proton acceptor; for 3-dehydroquinate synthase activity) is an active-site residue. Residues histidine 294 and lysine 363 each coordinate 7-phospho-2-dehydro-3-deoxy-D-arabino-heptonate. Position 294 (histidine 294) interacts with Zn(2+). Residues 404-862 are EPSP synthase; that stretch reads VYPFKTLENG…WDVLHTQLGA (459 aa). The active-site For EPSP synthase activity is the cysteine 844. The shikimate kinase stretch occupies residues 881–1070; the sequence is SIVIIGMRAA…IPTNRSSFVC (190 aa). ATP is bound at residue 886–893; the sequence is GMRAAGKT. The interval 1071-1283 is 3-dehydroquinase; it reads LTFDDLAAHK…SAPGQLTLSQ (213 aa). Histidine 1188 functions as the Proton acceptor; for 3-dehydroquinate dehydratase activity in the catalytic mechanism. The active-site Schiff-base intermediate with substrate; for 3-dehydroquinate dehydratase activity is lysine 1217. The interval 1296 to 1579 is shikimate dehydrogenase; the sequence is AKNFYVVGSP…IYSAVTEEQA (284 aa).

The protein in the N-terminal section; belongs to the sugar phosphate cyclases superfamily. Dehydroquinate synthase family. This sequence in the 2nd section; belongs to the EPSP synthase family. It in the 3rd section; belongs to the shikimate kinase family. In the 4th section; belongs to the type-I 3-dehydroquinase family. The protein in the C-terminal section; belongs to the shikimate dehydrogenase family. Homodimer. The cofactor is Zn(2+).

The protein localises to the cytoplasm. It carries out the reaction 7-phospho-2-dehydro-3-deoxy-D-arabino-heptonate = 3-dehydroquinate + phosphate. It catalyses the reaction 3-dehydroquinate = 3-dehydroshikimate + H2O. The enzyme catalyses shikimate + NADP(+) = 3-dehydroshikimate + NADPH + H(+). The catalysed reaction is shikimate + ATP = 3-phosphoshikimate + ADP + H(+). It carries out the reaction 3-phosphoshikimate + phosphoenolpyruvate = 5-O-(1-carboxyvinyl)-3-phosphoshikimate + phosphate. It functions in the pathway metabolic intermediate biosynthesis; chorismate biosynthesis; chorismate from D-erythrose 4-phosphate and phosphoenolpyruvate: step 2/7. Its pathway is metabolic intermediate biosynthesis; chorismate biosynthesis; chorismate from D-erythrose 4-phosphate and phosphoenolpyruvate: step 3/7. It participates in metabolic intermediate biosynthesis; chorismate biosynthesis; chorismate from D-erythrose 4-phosphate and phosphoenolpyruvate: step 4/7. The protein operates within metabolic intermediate biosynthesis; chorismate biosynthesis; chorismate from D-erythrose 4-phosphate and phosphoenolpyruvate: step 5/7. It functions in the pathway metabolic intermediate biosynthesis; chorismate biosynthesis; chorismate from D-erythrose 4-phosphate and phosphoenolpyruvate: step 6/7. Its function is as follows. The AROM polypeptide catalyzes 5 consecutive enzymatic reactions in prechorismate polyaromatic amino acid biosynthesis. The polypeptide is Pentafunctional AROM polypeptide (Lachancea thermotolerans (strain ATCC 56472 / CBS 6340 / NRRL Y-8284) (Yeast)).